Consider the following 368-residue polypeptide: Serine/threonine-protein kinase CAK1 (368 aa).

Residues 1–368 (MKLDSIDITH…QRILQELEKP (368 aa)) form the Protein kinase domain. The active-site Proton acceptor is the aspartate 156.

The protein belongs to the protein kinase superfamily. CMGC Ser/Thr protein kinase family. CDC2/CDKX subfamily.

The enzyme catalyses L-seryl-[protein] + ATP = O-phospho-L-seryl-[protein] + ADP + H(+). The catalysed reaction is L-threonyl-[protein] + ATP = O-phospho-L-threonyl-[protein] + ADP + H(+). The protein is Serine/threonine-protein kinase CAK1 (CAK1) of Saccharomyces cerevisiae (strain ATCC 204508 / S288c) (Baker's yeast).